We begin with the raw amino-acid sequence, 343 residues long: L-threonine 3-dehydrogenase (343 aa).

Cys39 serves as a coordination point for Zn(2+). Active-site charge relay system residues include Thr41 and His44. His64, Glu65, Cys94, Cys97, Cys100, and Cys108 together coordinate Zn(2+). NAD(+)-binding positions include Ile176, Asp196, Arg201, 263–265, and 287–288; these read LGI and IY.

Belongs to the zinc-containing alcohol dehydrogenase family. In terms of assembly, homotetramer. Zn(2+) serves as cofactor.

The protein localises to the cytoplasm. The catalysed reaction is L-threonine + NAD(+) = (2S)-2-amino-3-oxobutanoate + NADH + H(+). It functions in the pathway amino-acid degradation; L-threonine degradation via oxydo-reductase pathway; glycine from L-threonine: step 1/2. Functionally, catalyzes the NAD(+)-dependent oxidation of L-threonine to 2-amino-3-ketobutyrate. This Anaeromyxobacter sp. (strain Fw109-5) protein is L-threonine 3-dehydrogenase.